Consider the following 381-residue polypeptide: Homoserine O-succinyltransferase (381 aa).

Positions 45–360 (NAVLVCHALN…PHGHDAFLLD (316 aa)) constitute an AB hydrolase-1 domain. The active-site Nucleophile is serine 151. Arginine 221 lines the substrate pocket. Active-site residues include aspartate 321 and histidine 354. Aspartate 355 contributes to the substrate binding site.

The protein belongs to the AB hydrolase superfamily. MetX family. Homodimer.

It is found in the cytoplasm. The catalysed reaction is L-homoserine + succinyl-CoA = O-succinyl-L-homoserine + CoA. Its pathway is amino-acid biosynthesis; L-methionine biosynthesis via de novo pathway; O-succinyl-L-homoserine from L-homoserine: step 1/1. In terms of biological role, transfers a succinyl group from succinyl-CoA to L-homoserine, forming succinyl-L-homoserine. This chain is Homoserine O-succinyltransferase, found in Burkholderia cenocepacia (strain HI2424).